The chain runs to 110 residues: UPF0060 membrane protein RSp1275 (110 aa).

4 helical membrane-spanning segments follow: residues 8 to 28 (FLFA…WLVL), 33 to 53 (SAWL…LLTL), 63 to 83 (AAYG…VDGA), and 90 to 110 (IGGA…PQPT).

This sequence belongs to the UPF0060 family.

The protein localises to the cell inner membrane. The chain is UPF0060 membrane protein RSp1275 from Ralstonia nicotianae (strain ATCC BAA-1114 / GMI1000) (Ralstonia solanacearum).